Reading from the N-terminus, the 720-residue chain is Phenylalanine--tRNA ligase beta subunit, chloroplastic (720 aa).

The 86-residue stretch at 319-404 (NSTLNIDISL…RVYGYNQFQS (86 aa)) folds into the B5 domain. Mg(2+) contacts are provided by Asp-382, Asp-388, Glu-391, and Glu-392. One can recognise an FDX-ACB domain in the interval 626-719 (SKYPCITRDL…IIKKLNLEIR (94 aa)).

This sequence belongs to the phenylalanyl-tRNA synthetase beta subunit family. Type 1 subfamily. In terms of assembly, tetramer of two alpha and two beta subunits. The cofactor is Mg(2+).

It localises to the plastid. The protein resides in the chloroplast. The enzyme catalyses tRNA(Phe) + L-phenylalanine + ATP = L-phenylalanyl-tRNA(Phe) + AMP + diphosphate + H(+). This chain is Phenylalanine--tRNA ligase beta subunit, chloroplastic (pheT), found in Porphyra purpurea (Red seaweed).